Here is a 514-residue protein sequence, read N- to C-terminus: H/ACA ribonucleoprotein complex subunit DKC1 (514 aa).

N-acetylalanine is present on alanine 2. Positions 2-21 (ADAEVIILPKKHKKKKERKS) are nucleolar localization. Lysine 20 participates in a covalent cross-link: Glycyl lysine isopeptide (Lys-Gly) (interchain with G-Cter in SUMO2). Serine 21 is modified (phosphoserine). Residues lysine 39 and lysine 43 each participate in a glycyl lysine isopeptide (Lys-Gly) (interchain with G-Cter in SUMO2) cross-link. Aspartate 125 functions as the Nucleophile in the catalytic mechanism. Lysine 191 participates in a covalent cross-link: Glycyl lysine isopeptide (Lys-Gly) (interchain with G-Cter in SUMO2). The 76-residue stretch at 296-371 (HKRLVMKDSA…IVAKIKRVIM (76 aa)) folds into the PUA domain. Position 387 is a phosphoserine (serine 387). Lysine 394 participates in a covalent cross-link: Glycyl lysine isopeptide (Lys-Gly) (interchain with G-Cter in SUMO2). Lysine 413 is covalently cross-linked (Glycyl lysine isopeptide (Lys-Gly) (interchain with G-Cter in SUMO1); alternate). Lysine 413 participates in a covalent cross-link: Glycyl lysine isopeptide (Lys-Gly) (interchain with G-Cter in SUMO2); alternate. Glycyl lysine isopeptide (Lys-Gly) (interchain with G-Cter in SUMO2) cross-links involve residues lysine 424 and lysine 433. Residues 443–514 (KTAKRKRESE…KAKEVELVSE (72 aa)) form a disordered region. The nuclear and nucleolar localization stretch occupies residues 446–514 (KRKRESESES…KAKEVELVSE (69 aa)). A phosphoserine mark is found at serine 451, serine 453, and serine 455. A Phosphothreonine modification is found at threonine 458. Lysine 467 participates in a covalent cross-link: Glycyl lysine isopeptide (Lys-Gly) (interchain with G-Cter in SUMO2). Over residues 468–480 (KEKKKSKKDKKAK) the composition is skewed to basic residues. Phosphoserine is present on residues serine 485, serine 494, and serine 513.

Belongs to the pseudouridine synthase TruB family. As to quaternary structure, part of the H/ACA small nucleolar ribonucleoprotein (H/ACA snoRNP) complex, which contains NHP2/NOLA2, GAR1/NOLA1, NOP10/NOLA3, and DKC1/NOLA4, which is presumed to be the catalytic subunit. The complex contains a stable core formed by binding of one or two NOP10-DKC1 heterodimers to NHP2; GAR1 subsequently binds to this core via DKC1. The complex binds a box H/ACA small nucleolar RNA (snoRNA), which may target the specific site of modification within the RNA substrate. During assembly, the complex contains NAF1 instead of GAR1/NOLA1. The complex also interacts with TERC, which contains a 3'-terminal domain related to the box H/ACA snoRNAs. Specific interactions with snoRNAs or TERC are mediated by GAR1 and NHP2. Associates with NOLC1/NOPP140. H/ACA snoRNPs interact with the SMN complex, consisting of SMN1 or SMN2, GEMIN2/SIP1, DDX20/GEMIN3, and GEMIN4. This is mediated by interaction between GAR1 and SMN1 or SMN2. The SMN complex may be required for correct assembly of the H/ACA snoRNP complex. Component of the telomerase holoenzyme complex composed of one molecule of TERT, one molecule of WRAP53/TCAB1, two molecules of H/ACA ribonucleoprotein complex subunits DKC1, NOP10, NHP2 and GAR1, and a telomerase RNA template component (TERC). The telomerase holoenzyme complex is associated with TEP1, SMG6/EST1A and POT1. Interacts with SHQ1; this interaction may lead to the stabilization of DKC1, from the time of its synthesis until its association with NOP10, NHP2, and NAF1 at the nascent H/ACA RNA. Interacts with HMBOX1. Interacts with DHX36. Ubiquitously expressed.

The protein resides in the nucleus. Its subcellular location is the nucleolus. The protein localises to the cajal body. It is found in the cytoplasm. It carries out the reaction uridine in 5S rRNA = pseudouridine in 5S rRNA. Its function is as follows. Catalytic subunit of H/ACA small nucleolar ribonucleoprotein (H/ACA snoRNP) complex, which catalyzes pseudouridylation of rRNA. This involves the isomerization of uridine such that the ribose is subsequently attached to C5, instead of the normal N1. Each rRNA can contain up to 100 pseudouridine ('psi') residues, which may serve to stabilize the conformation of rRNAs. Required for ribosome biogenesis and telomere maintenance. Also required for correct processing or intranuclear trafficking of TERC, the RNA component of the telomerase reverse transcriptase (TERT) holoenzyme. Functionally, promotes cell to cell and cell to substratum adhesion, increases the cell proliferation rate and leads to cytokeratin hyper-expression. The sequence is that of H/ACA ribonucleoprotein complex subunit DKC1 from Homo sapiens (Human).